The following is a 312-amino-acid chain: Prephenate dehydratase (312 aa).

A Prephenate dehydratase domain is found at 3–194; that stretch reads GIAYLGPEGT…ARTRFVLVGR (192 aa). The ACT domain occupies 208-285; that stretch reads SVVLQLDNVP…ADVRYLGSWP (78 aa). The segment at 291 to 312 is disordered; the sequence is GAAPPPMDESASWLEGLREGRP.

Homodimer.

The enzyme catalyses prephenate + H(+) = 3-phenylpyruvate + CO2 + H2O. It functions in the pathway amino-acid biosynthesis; L-phenylalanine biosynthesis; phenylpyruvate from prephenate: step 1/1. The protein is Prephenate dehydratase (pheA) of Mycolicibacterium vanbaalenii (strain DSM 7251 / JCM 13017 / BCRC 16820 / KCTC 9966 / NRRL B-24157 / PYR-1) (Mycobacterium vanbaalenii).